The chain runs to 188 residues: ATP synthase subunit delta (188 aa).

It belongs to the ATPase delta chain family. F-type ATPases have 2 components, F(1) - the catalytic core - and F(0) - the membrane proton channel. F(1) has five subunits: alpha(3), beta(3), gamma(1), delta(1), epsilon(1). F(0) has three main subunits: a(1), b(2) and c(10-14). The alpha and beta chains form an alternating ring which encloses part of the gamma chain. F(1) is attached to F(0) by a central stalk formed by the gamma and epsilon chains, while a peripheral stalk is formed by the delta and b chains.

The protein localises to the cell inner membrane. Functionally, f(1)F(0) ATP synthase produces ATP from ADP in the presence of a proton or sodium gradient. F-type ATPases consist of two structural domains, F(1) containing the extramembraneous catalytic core and F(0) containing the membrane proton channel, linked together by a central stalk and a peripheral stalk. During catalysis, ATP synthesis in the catalytic domain of F(1) is coupled via a rotary mechanism of the central stalk subunits to proton translocation. In terms of biological role, this protein is part of the stalk that links CF(0) to CF(1). It either transmits conformational changes from CF(0) to CF(1) or is implicated in proton conduction. This Rhizobium meliloti (strain 1021) (Ensifer meliloti) protein is ATP synthase subunit delta.